The following is a 591-amino-acid chain: Aspartate--tRNA ligase (591 aa).

Residue glutamate 172 participates in L-aspartate binding. The aspartate stretch occupies residues 196–199 (QLFK). Arginine 218 is a binding site for L-aspartate. Residues 218 to 220 (RDE) and glutamine 227 contribute to the ATP site. Histidine 449 provides a ligand contact to L-aspartate. Residue glutamate 483 coordinates ATP. Residue arginine 490 participates in L-aspartate binding. 535-538 (GLDR) lines the ATP pocket.

Belongs to the class-II aminoacyl-tRNA synthetase family. Type 1 subfamily. As to quaternary structure, homodimer.

Its subcellular location is the cytoplasm. It carries out the reaction tRNA(Asp) + L-aspartate + ATP = L-aspartyl-tRNA(Asp) + AMP + diphosphate. Its function is as follows. Catalyzes the attachment of L-aspartate to tRNA(Asp) in a two-step reaction: L-aspartate is first activated by ATP to form Asp-AMP and then transferred to the acceptor end of tRNA(Asp). The sequence is that of Aspartate--tRNA ligase from Actinobacillus pleuropneumoniae serotype 7 (strain AP76).